Consider the following 185-residue polypeptide: Alkyl hydroperoxide reductase AhpD (185 aa).

The active-site Proton donor is the cysteine 132. A disulfide bridge links cysteine 132 with cysteine 135. Cysteine 135 acts as the Cysteine sulfenic acid (-SOH) intermediate in catalysis.

This sequence belongs to the AhpD family.

It carries out the reaction N(6)-[(R)-dihydrolipoyl]-L-lysyl-[lipoyl-carrier protein] + a hydroperoxide = N(6)-[(R)-lipoyl]-L-lysyl-[lipoyl-carrier protein] + an alcohol + H2O. In terms of biological role, antioxidant protein with alkyl hydroperoxidase activity. Required for the reduction of the AhpC active site cysteine residues and for the regeneration of the AhpC enzyme activity. The protein is Alkyl hydroperoxide reductase AhpD of Anaeromyxobacter sp. (strain Fw109-5).